The sequence spans 284 residues: Tryptophan 2,3-dioxygenase (284 aa).

Residues phenylalanine 53 to histidine 57 and arginine 119 each bind substrate. Histidine 242 contacts heme. Substrate is bound at residue threonine 256.

The protein belongs to the tryptophan 2,3-dioxygenase family. As to quaternary structure, homotetramer. It depends on heme as a cofactor.

The catalysed reaction is L-tryptophan + O2 = N-formyl-L-kynurenine. Its pathway is amino-acid degradation; L-tryptophan degradation via kynurenine pathway; L-kynurenine from L-tryptophan: step 1/2. The protein operates within siderophore biosynthesis; quinolobactin biosynthesis. Functionally, heme-dependent dioxygenase that catalyzes the oxidative cleavage of the L-tryptophan (L-Trp) pyrrole ring and converts L-tryptophan to N-formyl-L-kynurenine. Catalyzes the oxidative cleavage of the indole moiety. Required for synthesis of the siderophore quinolobactin. This is Tryptophan 2,3-dioxygenase from Pseudomonas fluorescens.